The primary structure comprises 308 residues: Glycine--tRNA ligase alpha subunit (308 aa).

It belongs to the class-II aminoacyl-tRNA synthetase family. In terms of assembly, tetramer of two alpha and two beta subunits.

It is found in the cytoplasm. It catalyses the reaction tRNA(Gly) + glycine + ATP = glycyl-tRNA(Gly) + AMP + diphosphate. This chain is Glycine--tRNA ligase alpha subunit, found in Polaromonas naphthalenivorans (strain CJ2).